The following is a 134-amino-acid chain: Large-conductance mechanosensitive channel (134 aa).

A run of 2 helical transmembrane segments spans residues 16 to 36 and 81 to 101; these read VIDL…VTAL and GDFL…FIIV.

The protein belongs to the MscL family. In terms of assembly, homopentamer.

Its subcellular location is the cell inner membrane. Its function is as follows. Channel that opens in response to stretch forces in the membrane lipid bilayer. May participate in the regulation of osmotic pressure changes within the cell. This Xylella fastidiosa (strain M12) protein is Large-conductance mechanosensitive channel.